Consider the following 324-residue polypeptide: Cytochrome c biogenesis protein CcsA (324 aa).

The next 8 helical transmembrane spans lie at 15–35, 44–64, 71–91, 98–118, 143–163, 228–248, 255–275, and 289–309; these read FSIVCIVITIHLITLLIDEII, GMIATFLCITVLLVTRCIYSG, LYESLIFLSWSLSFIHIVPYF, LSTITASSVIFTQGFATSGLL, MILGYAALLCGSLLSVALLVL, VISLGFIFLTIGILSGAVWAN, WNWDPKETWAFITWIVFAVYL, and AIVASMGFLIIWICYFGVNLL.

The protein belongs to the CcmF/CycK/Ccl1/NrfE/CcsA family. May interact with Ccs1.

The protein resides in the plastid. It localises to the chloroplast thylakoid membrane. Its function is as follows. Required during biogenesis of c-type cytochromes (cytochrome c6 and cytochrome f) at the step of heme attachment. This is Cytochrome c biogenesis protein CcsA from Daucus carota (Wild carrot).